Reading from the N-terminus, the 471-residue chain is MNRMWEKKFWISCFFIILFFILVTLQVMVELGRFEKRETKSFTVIDIKEQKKPLLKHIKEKSNSRLRHLKDNYPIMLWWSPLTGENGRLGQCGTDTCFFTINRTYLQDPMTKAILFYGTDFNMTSLPLPREISHEWALFHEESPKNNYKLFHEPAITLFNHTATFSRHSHLPLTSQYLEGLQALRSKEYLISIQKKNFLRKRLAPLAYVQSDCDPPSDRDSYVQELMKYIAVDSYGECLHNRDLPQQVNNPSSMDDSQFHHILAQYKFILAFENAVCEDYITEKLWRPLKLGAVPVYFGAPNVENWLPSNKSAIIVGRFSHPKELATYIKKLDKNDKLYMQFIEWKLHGNINNKHLLSTITERKWGVQDVTQDNYIDAFECMICKRVWENVRLKDRVSTTKLWNAESLHLNCPAPEAFSFLPGHLLKSSMREMWKPSFEQSKKEAKALRTLVDRNRNFTTVEFWNLVFKFQ.

The Cytoplasmic segment spans residues 1 to 8 (MNRMWEKK). A helical; Signal-anchor for type II membrane protein membrane pass occupies residues 9-29 (FWISCFFIILFFILVTLQVMV). The Lumenal portion of the chain corresponds to 30-471 (ELGRFEKRET…EFWNLVFKFQ (442 aa)). Residues Asn102, Asn122, Asn160, and Asn310 are each glycosylated (N-linked (GlcNAc...) asparagine). Cys381 and Cys384 are joined by a disulfide. A glycan (N-linked (GlcNAc...) asparagine) is linked at Asn457.

It belongs to the glycosyltransferase 10 family.

The protein localises to the endoplasmic reticulum membrane. It carries out the reaction L-threonyl-[protein] + GDP-beta-L-fucose = 3-O-(alpha-L-fucosyl)-L-threonyl-[protein] + GDP + H(+). The catalysed reaction is L-seryl-[protein] + GDP-beta-L-fucose = 3-O-(alpha-L-fucosyl)-L-seryl-[protein] + GDP + H(+). It participates in protein modification; protein glycosylation. Its function is as follows. Protein O-fucosyltransferase that specifically catalyzes O-fucosylation of serine or threonine residues in EMI domains of target proteins. Attaches fucose through an O-glycosidic linkage. O-fucosylation of EMI domain-containing proteins may be required for facilitating protein folding and secretion. The protein is GDP-fucose protein O-fucosyltransferase 3 (fut10) of Xenopus tropicalis (Western clawed frog).